Here is a 363-residue protein sequence, read N- to C-terminus: Fructose-bisphosphate aldolase (363 aa).

Arg-56 and Lys-147 together coordinate substrate. The active-site Proton acceptor is the Glu-188. Catalysis depends on Lys-230, which acts as the Schiff-base intermediate with dihydroxyacetone-P.

This sequence belongs to the class I fructose-bisphosphate aldolase family.

It carries out the reaction beta-D-fructose 1,6-bisphosphate = D-glyceraldehyde 3-phosphate + dihydroxyacetone phosphate. Its pathway is carbohydrate degradation; glycolysis; D-glyceraldehyde 3-phosphate and glycerone phosphate from D-glucose: step 4/4. The polypeptide is Fructose-bisphosphate aldolase (Schistosoma mansoni (Blood fluke)).